We begin with the raw amino-acid sequence, 354 residues long: Green-sensitive opsin-3 (354 aa).

Residues 1–39 (MSGLNGFEGDNFYIPMSNRTGLVRDPFVYEQYYLAEPWQ) lie on the Extracellular side of the membrane. A glycan (N-linked (GlcNAc...) asparagine) is linked at asparagine 18. Residues 40–64 (FKLLACYMFFLICLGLPINGFTLFV) form a helical membrane-spanning segment. Residues 65-76 (TAQHKKLQQPLN) lie on the Cytoplasmic side of the membrane. A helical membrane pass occupies residues 77–102 (FILVNLAVAGMIMVCFGFTITISSAV). Over 103–116 (NGYFYFGPTACAIE) the chain is Extracellular. Cysteine 113 and cysteine 190 are oxidised to a cystine. A helical membrane pass occupies residues 117-136 (GFMATLGGEVALWSLVVLAI). Residues 137–155 (ERYIVVCKPMGSFKFSASH) are Cytoplasmic-facing. Residues 156–179 (ALGGIGFTWFMAMTCAAPPLVGWS) form a helical membrane-spanning segment. The Extracellular portion of the chain corresponds to 180–205 (RYIPEGLQCSCGPDYYTLNPKYNNES). N-linked (GlcNAc...) asparagine glycosylation is present at asparagine 203. The chain crosses the membrane as a helical span at residues 206–233 (YVIYMFVVHFIVPVTVIFFTYGRLVCTV). At 234–255 (KSAAAAQQDSASTQKAEKEVTR) the chain is on the cytoplasmic side. Residues 256–279 (MVILMVVGFLVAWTPYATVAAWIF) form a helical membrane-spanning segment. The Extracellular portion of the chain corresponds to 280–287 (FNKGAAFT). Residues 288-312 (AQFMAVPAFFSKSSALFNPIIYVLL) form a helical membrane-spanning segment. The residue at position 299 (lysine 299) is an N6-(retinylidene)lysine. Topologically, residues 313–354 (NKQFRNCMLTTLFCGKNPLGDEESSTVSTKTEVSTVSSVSPA) are cytoplasmic.

It belongs to the G-protein coupled receptor 1 family. Opsin subfamily. In terms of tissue distribution, the color pigments are found in the cone photoreceptor cells.

The protein resides in the membrane. Visual pigments are the light-absorbing molecules that mediate vision. They consist of an apoprotein, opsin, covalently linked to cis-retinal. The polypeptide is Green-sensitive opsin-3 (RH11) (Psalidodon fasciatus (Banded astyanax)).